The chain runs to 551 residues: Dihydroxy-acid dehydratase (551 aa).

D78 serves as a coordination point for Mg(2+). C119 is a [2Fe-2S] cluster binding site. Mg(2+)-binding residues include D120 and K121. K121 is subject to N6-carboxylysine. Position 191 (C191) interacts with [2Fe-2S] cluster. Position 442 (E442) interacts with Mg(2+). The Proton acceptor role is filled by S468.

This sequence belongs to the IlvD/Edd family. In terms of assembly, homodimer. [2Fe-2S] cluster serves as cofactor. It depends on Mg(2+) as a cofactor.

It catalyses the reaction (2R)-2,3-dihydroxy-3-methylbutanoate = 3-methyl-2-oxobutanoate + H2O. It carries out the reaction (2R,3R)-2,3-dihydroxy-3-methylpentanoate = (S)-3-methyl-2-oxopentanoate + H2O. The protein operates within amino-acid biosynthesis; L-isoleucine biosynthesis; L-isoleucine from 2-oxobutanoate: step 3/4. Its pathway is amino-acid biosynthesis; L-valine biosynthesis; L-valine from pyruvate: step 3/4. Its function is as follows. Functions in the biosynthesis of branched-chain amino acids. Catalyzes the dehydration of (2R,3R)-2,3-dihydroxy-3-methylpentanoate (2,3-dihydroxy-3-methylvalerate) into 2-oxo-3-methylpentanoate (2-oxo-3-methylvalerate) and of (2R)-2,3-dihydroxy-3-methylbutanoate (2,3-dihydroxyisovalerate) into 2-oxo-3-methylbutanoate (2-oxoisovalerate), the penultimate precursor to L-isoleucine and L-valine, respectively. This chain is Dihydroxy-acid dehydratase, found in Halothermothrix orenii (strain H 168 / OCM 544 / DSM 9562).